An 805-amino-acid chain; its full sequence is Zinc finger X-chromosomal protein (805 aa).

S274 carries the phosphoserine modification. 13 C2H2-type zinc fingers span residues Y425–H447, Y456–H478, I488–H510, H519–H542, H548–H570, Y576–H599, F605–H627, H633–H656, H662–H684, H690–H713, F719–H741, Y747–H770, and H776–H798.

This sequence belongs to the krueppel C2H2-type zinc-finger protein family. ZFX/ZFY subfamily.

It is found in the nucleus. Functionally, probable transcriptional activator. This Homo sapiens (Human) protein is Zinc finger X-chromosomal protein (ZFX).